We begin with the raw amino-acid sequence, 137 residues long: MPNQEQIKRMNDINDLIKLIASIDHRTFYRKSKDRIAYFRFKKKLFFVDDYTGDDVYPYEMGYGSPNGFSHGGNMWQLVNSFRKFIITGKCGELRDYKEIWAYSYEGCMKIRQKAKEIGFIETVDYPYSFDEWMNTN.

This chain is SPbeta prophage-derived uncharacterized protein YoqU (yoqU), found in Bacillus subtilis (strain 168).